The sequence spans 197 residues: MIDSIVGTIQEVFNNYVILNYNNIYIKIFCNSTKFSEFLGKEKRVYVSLKFNENLSELECYGFLTREERELFLKLQKVTGVGSKLALQILSSIDYQQLIVEIAKGNVARLEKVKGIGKKTASRIILELKETLKKEFKVASTSGTEEKTYEKLEEISLALLSLGYEIDEINQVLSSEDFSELSLEDGIKLALKKLSKI.

Positions 1–64 are domain I; the sequence is MIDSIVGTIQ…LSELECYGFL (64 aa). Positions 65–143 are domain II; it reads TREERELFLK…KEFKVASTSG (79 aa). The flexible linker stretch occupies residues 144-152; sequence TEEKTYEKL. The segment at 152–197 is domain III; the sequence is LEEISLALLSLGYEIDEINQVLSSEDFSELSLEDGIKLALKKLSKI.

It belongs to the RuvA family. As to quaternary structure, homotetramer. Forms an RuvA(8)-RuvB(12)-Holliday junction (HJ) complex. HJ DNA is sandwiched between 2 RuvA tetramers; dsDNA enters through RuvA and exits via RuvB. An RuvB hexamer assembles on each DNA strand where it exits the tetramer. Each RuvB hexamer is contacted by two RuvA subunits (via domain III) on 2 adjacent RuvB subunits; this complex drives branch migration. In the full resolvosome a probable DNA-RuvA(4)-RuvB(12)-RuvC(2) complex forms which resolves the HJ.

It localises to the cytoplasm. Its function is as follows. The RuvA-RuvB-RuvC complex processes Holliday junction (HJ) DNA during genetic recombination and DNA repair, while the RuvA-RuvB complex plays an important role in the rescue of blocked DNA replication forks via replication fork reversal (RFR). RuvA specifically binds to HJ cruciform DNA, conferring on it an open structure. The RuvB hexamer acts as an ATP-dependent pump, pulling dsDNA into and through the RuvAB complex. HJ branch migration allows RuvC to scan DNA until it finds its consensus sequence, where it cleaves and resolves the cruciform DNA. The sequence is that of Holliday junction branch migration complex subunit RuvA from Caldicellulosiruptor saccharolyticus (strain ATCC 43494 / DSM 8903 / Tp8T 6331).